The sequence spans 603 residues: Elongation factor 4 (603 aa).

The region spanning serine 7–glutamate 189 is the tr-type G domain. Residues aspartate 19–threonine 24 and asparagine 136–aspartate 139 contribute to the GTP site.

Belongs to the TRAFAC class translation factor GTPase superfamily. Classic translation factor GTPase family. LepA subfamily.

It is found in the cell inner membrane. It carries out the reaction GTP + H2O = GDP + phosphate + H(+). Its function is as follows. Required for accurate and efficient protein synthesis under certain stress conditions. May act as a fidelity factor of the translation reaction, by catalyzing a one-codon backward translocation of tRNAs on improperly translocated ribosomes. Back-translocation proceeds from a post-translocation (POST) complex to a pre-translocation (PRE) complex, thus giving elongation factor G a second chance to translocate the tRNAs correctly. Binds to ribosomes in a GTP-dependent manner. The protein is Elongation factor 4 of Acaryochloris marina (strain MBIC 11017).